Here is a 632-residue protein sequence, read N- to C-terminus: tRNA uridine 5-carboxymethylaminomethyl modification enzyme MnmG (632 aa).

FAD contacts are provided by residues 13 to 18 (GGGHAG), Val125, and Ser180. 273-287 (GPRYCPSIEDKVMRF) is an NAD(+) binding site. Residue Gln370 participates in FAD binding.

The protein belongs to the MnmG family. In terms of assembly, homodimer. Heterotetramer of two MnmE and two MnmG subunits. The cofactor is FAD.

The protein resides in the cytoplasm. NAD-binding protein involved in the addition of a carboxymethylaminomethyl (cmnm) group at the wobble position (U34) of certain tRNAs, forming tRNA-cmnm(5)s(2)U34. This Vibrio vulnificus (strain YJ016) protein is tRNA uridine 5-carboxymethylaminomethyl modification enzyme MnmG.